The following is a 431-amino-acid chain: Glucose-1-phosphate adenylyltransferase (431 aa).

Residues Y108, G174, 189–190, and S207 each bind alpha-D-glucose 1-phosphate; that span reads EK.

Belongs to the bacterial/plant glucose-1-phosphate adenylyltransferase family. As to quaternary structure, homotetramer.

It catalyses the reaction alpha-D-glucose 1-phosphate + ATP + H(+) = ADP-alpha-D-glucose + diphosphate. The protein operates within glycan biosynthesis; glycogen biosynthesis. In terms of biological role, involved in the biosynthesis of ADP-glucose, a building block required for the elongation reactions to produce glycogen. Catalyzes the reaction between ATP and alpha-D-glucose 1-phosphate (G1P) to produce pyrophosphate and ADP-Glc. In Actinobacillus succinogenes (strain ATCC 55618 / DSM 22257 / CCUG 43843 / 130Z), this protein is Glucose-1-phosphate adenylyltransferase.